We begin with the raw amino-acid sequence, 239 residues long: Aspartate/glutamate leucyltransferase (239 aa).

This sequence belongs to the R-transferase family. Bpt subfamily.

It is found in the cytoplasm. The catalysed reaction is N-terminal L-glutamyl-[protein] + L-leucyl-tRNA(Leu) = N-terminal L-leucyl-L-glutamyl-[protein] + tRNA(Leu) + H(+). It catalyses the reaction N-terminal L-aspartyl-[protein] + L-leucyl-tRNA(Leu) = N-terminal L-leucyl-L-aspartyl-[protein] + tRNA(Leu) + H(+). In terms of biological role, functions in the N-end rule pathway of protein degradation where it conjugates Leu from its aminoacyl-tRNA to the N-termini of proteins containing an N-terminal aspartate or glutamate. This chain is Aspartate/glutamate leucyltransferase, found in Campylobacter jejuni subsp. jejuni serotype O:6 (strain 81116 / NCTC 11828).